The chain runs to 142 residues: Large-conductance mechanosensitive channel (142 aa).

Helical transmembrane passes span 14–34 (VMDLAVGVIIGAAFSKIVDSV) and 82–102 (GNFITVFINFLILAWIIFLLI).

This sequence belongs to the MscL family. Homopentamer.

It localises to the cell inner membrane. Its function is as follows. Channel that opens in response to stretch forces in the membrane lipid bilayer. May participate in the regulation of osmotic pressure changes within the cell. In Sinorhizobium medicae (strain WSM419) (Ensifer medicae), this protein is Large-conductance mechanosensitive channel.